The chain runs to 99 residues: uncharacterized protein (99 aa).

This is an uncharacterized protein from Escherichia coli O157:H7.